A 259-amino-acid chain; its full sequence is Bis(5'-nucleosyl)-tetraphosphatase, symmetrical (259 aa).

It belongs to the Ap4A hydrolase family.

It carries out the reaction P(1),P(4)-bis(5'-adenosyl) tetraphosphate + H2O = 2 ADP + 2 H(+). In terms of biological role, hydrolyzes diadenosine 5',5'''-P1,P4-tetraphosphate to yield ADP. This Klebsiella aerogenes (Enterobacter aerogenes) protein is Bis(5'-nucleosyl)-tetraphosphatase, symmetrical (apaH).